Here is a 291-residue protein sequence, read N- to C-terminus: Secretory carrier-associated membrane protein 5 (291 aa).

The segment covering 1–10 (MGGRYDRNTF) has biased composition (basic and acidic residues). Residues 1–66 (MGGRYDRNTF…GSGAQDLKKK (66 aa)) are disordered. The Cytoplasmic segment spans residues 1 to 126 (MGGRYDRNTF…EILVRLQRLQ (126 aa)). The residue at position 34 (Ser34) is a Phosphoserine. A coiled-coil region spans residues 58–94 (SGAQDLKKKEKELQAKEADLRRREQDLKRKQDAAARA). The next 4 helical transmembrane spans lie at 127–147 (YIAFATYLGLVLALFWNIIAV), 159–179 (IWLLAVIYFISGVPGGYVLWY), 194–214 (FGWFFLFYMLHILFCLFAAVA), and 242–262 (IFYFIGFGLFCLESVVSIWVI). Residues 263–288 (QQVYMYFRGSGKADDMRRDAARGAMR) are Cytoplasmic-facing.

The protein belongs to the SCAMP family.

The protein localises to the cell membrane. Its subcellular location is the cytoplasmic vesicle. The protein resides in the secretory vesicle membrane. Probably involved in membrane trafficking. The sequence is that of Secretory carrier-associated membrane protein 5 (SCAMP5) from Arabidopsis thaliana (Mouse-ear cress).